Consider the following 942-residue polypeptide: UvrABC system protein A (942 aa).

32–39 (GLSGSGKS) contacts ATP. Residues 251–278 (CPVCGFTVPELEPRLFSFNAPFGSCPTC) form a C4-type zinc finger. 2 ABC transporter domains span residues 308–589 (WNPI…KKSI) and 609–937 (GNGR…HYLK). Position 641-648 (641-648 (GVSGSGKS)) interacts with ATP. The C4-type zinc finger occupies 740 to 766 (CEACSGDGIIKIEMHFLPDVYVPCEVC).

Belongs to the ABC transporter superfamily. UvrA family. Forms a heterotetramer with UvrB during the search for lesions.

Its subcellular location is the cytoplasm. Functionally, the UvrABC repair system catalyzes the recognition and processing of DNA lesions. UvrA is an ATPase and a DNA-binding protein. A damage recognition complex composed of 2 UvrA and 2 UvrB subunits scans DNA for abnormalities. When the presence of a lesion has been verified by UvrB, the UvrA molecules dissociate. The protein is UvrABC system protein A of Streptococcus pyogenes serotype M6 (strain ATCC BAA-946 / MGAS10394).